A 230-amino-acid chain; its full sequence is MNRLNIAVSCLATALLFGCEALHPPAPGDNPDYAPTYPVTPDPKELRKVSGAIYSSETALPLFETPRARHPGDILTVYLIEKTDAQKNATTTQRKNDTTKITNKLFLGRPISLGSGYSMDFDLDNQRQFNGEGRSIQNNKLAGSISVTVAKVLANGNMVVQGEKWVRINQGNEFVRLSGIVRPQDIKADNTITSDRIANARISYGGTGQINNTNAQGWLSRILWGPLFPT.

The first 18 residues, 1–18 (MNRLNIAVSCLATALLFG), serve as a signal peptide directing secretion. Residue C19 is the site of N-palmitoyl cysteine attachment. C19 carries the S-diacylglycerol cysteine lipid modification.

The protein belongs to the FlgH family. The basal body constitutes a major portion of the flagellar organelle and consists of four rings (L,P,S, and M) mounted on a central rod.

The protein localises to the cell outer membrane. It is found in the bacterial flagellum basal body. Its function is as follows. Assembles around the rod to form the L-ring and probably protects the motor/basal body from shearing forces during rotation. This chain is Flagellar L-ring protein, found in Legionella pneumophila (strain Corby).